The sequence spans 529 residues: Beta-galactoside alpha-2,6-sialyltransferase 2 (529 aa).

Residues 1–11 (MKPHLKQWRQR) lie on the Cytoplasmic side of the membrane. The chain crosses the membrane as a helical; Signal-anchor for type II membrane protein span at residues 12–32 (MLFGIFAWGLLFLLIFIYFTD). Residues 33–529 (SNPAEPVPSS…PAPSPVIPHS (497 aa)) are Lumenal-facing. O-linked (GalNAc...) serine glycosylation is present at Ser69. Asn211 carries N-linked (GlcNAc...) asparagine glycosylation. Cystine bridges form between Cys253–Cys519, Cys296–Cys448, and Cys466–Cys477.

It belongs to the glycosyltransferase 29 family. In terms of processing, O-glycosylated. Weakly expressed in some tissues, such as small intestine, colon and fetal brain.

The protein localises to the golgi apparatus. It localises to the golgi stack membrane. The catalysed reaction is a beta-D-galactoside + CMP-N-acetyl-beta-neuraminate = an N-acetyl-alpha-neuraminyl-(2-&gt;6)-beta-D-galactosyl derivative + CMP + H(+). Its function is as follows. Transfers sialic acid from the donor of substrate CMP-sialic acid to galactose containing acceptor substrates. Has alpha-2,6-sialyltransferase activity toward oligosaccharides that have the Gal-beta-1,4-GlcNAc sequence at the non-reducing end of their carbohydrate groups, but it has weak or no activities toward glycoproteins and glycolipids. In Homo sapiens (Human), this protein is Beta-galactoside alpha-2,6-sialyltransferase 2 (ST6GAL2).